We begin with the raw amino-acid sequence, 969 residues long: Protein translocase subunit SecA (969 aa).

Residues Gln-99, 117-121, and Asp-631 each bind ATP; that span reads GEGKT.

This sequence belongs to the SecA family. In terms of assembly, monomer and homodimer. Part of the essential Sec protein translocation apparatus which comprises SecA, SecYEG and auxiliary proteins SecDF. Other proteins may also be involved.

It localises to the cell inner membrane. The protein localises to the cytoplasm. It catalyses the reaction ATP + H2O + cellular proteinSide 1 = ADP + phosphate + cellular proteinSide 2.. Part of the Sec protein translocase complex. Interacts with the SecYEG preprotein conducting channel. Has a central role in coupling the hydrolysis of ATP to the transfer of proteins into and across the cell membrane, serving as an ATP-driven molecular motor driving the stepwise translocation of polypeptide chains across the membrane. This chain is Protein translocase subunit SecA, found in Chlamydia trachomatis serovar A (strain ATCC VR-571B / DSM 19440 / HAR-13).